The primary structure comprises 1277 residues: Clustered mitochondria protein 1 (1277 aa).

2 disordered regions span residues 19-39 (LPKE…QSSK) and 148-176 (LPLG…NTFK). Residues 27 to 36 (HNTKHLKKTQ) are compositionally biased toward basic residues. A compositionally biased stretch (basic and acidic residues) spans 153-176 (IKERSKQEEKDEKSDPEEKKNTFK). The Clu domain occupies 339–596 (PPNNPDYLRL…NTYPLDINFA (258 aa)). TPR repeat units follow at residues 704-738 (GINM…VEQD), 1020-1053 (AEKY…YERV), and 1148-1181 (GYTE…FTKQ). The interval 1212-1277 (LAQDQMSTTG…TNNKKKHGKK (66 aa)) is disordered. Positions 1235-1249 (KKDDVKPELANKSVD) are enriched in basic and acidic residues. S1247 bears the Phosphoserine mark. Over residues 1264 to 1277 (SKNKTNNKKKHGKK) the composition is skewed to basic residues.

The protein belongs to the CLU family. May associate with the eukaryotic translation initiation factor 3 (eIF-3) complex. Associates with the 80S ribosome.

The protein resides in the cytoplasm. MRNA-binding protein involved in proper cytoplasmic distribution of mitochondria. This Saccharomyces cerevisiae (strain ATCC 204508 / S288c) (Baker's yeast) protein is Clustered mitochondria protein 1.